The chain runs to 379 residues: MSKGPGDFKKSWNGFAAQTPQNTPSSDVHLSKAALEKARQTLQSQLEDKSAHDEVSGLLRNNPAMLSMIEGRLSSLVGKSSGYIESLAPAVQNRITALKGLQKDCDAIQYEFRQKMLDLETKYEKKYQPIFSRRAEIIKGVSEPVDDELDHEEEIFQNNLPDPKGIPEFWLTCLHNVFLVGEMITPEDENVLRSLSDIRFTNLSGDVHGYKLEFEFDSNDYFTNKILTKTYYYKDDLSPSGEFLYDHAEGDKINWIKPEKNLTVRVETKKQRNRKTNQTRLVRTTVPNDSFFNFFSPPQLDDDESDDGLDDKTELLELDYQLGEVFKDQIIPLAIDCFLEEGDLSDFNQMDEEDSEDAYTDEEDLSSDDEEILSSEISD.

Residues 1-10 (MSKGPGDFKK) are compositionally biased toward basic and acidic residues. Disordered regions lie at residues 1-30 (MSKG…DVHL) and 345-379 (SDFN…EISD). Polar residues predominate over residues 16 to 28 (AAQTPQNTPSSDV).

This sequence belongs to the nucleosome assembly protein (NAP) family.

Its subcellular location is the nucleus. The sequence is that of Putative nucleosome assembly protein C2D10.11C from Schizosaccharomyces pombe (strain 972 / ATCC 24843) (Fission yeast).